The following is a 1157-amino-acid chain: Probable ATP-dependent RNA helicase DHX37 (1157 aa).

A compositionally biased stretch (basic residues) spans 1–10 (MGKLRRRYNI). 2 disordered regions span residues 1–77 (MGKL…KKEK) and 116–225 (TSKL…AAPP). Residues 21-30 (SKGPPEPPPV) are compositionally biased toward pro residues. Over residues 159–184 (AEEEEEEEEESESELEEESELDEDPA) the composition is skewed to acidic residues. 2 stretches are compositionally biased toward pro residues: residues 198-208 (PLPPAPAPSSQ) and 216-225 (VPPPPAAAPP). The Helicase ATP-binding domain maps to 262-429 (MEAVAEHPIV…PRLFAKPPPV (168 aa)). Position 275–282 (275–282 (GETGSGKT)) interacts with ATP. Residues 372–375 (DEAH) carry the DEAH box motif. The 258-residue stretch at 459–716 (KVCKIHRMLP…DLILQMKALN (258 aa)) folds into the Helicase C-terminal domain. 2 disordered regions span residues 494–523 (PPSR…SRAR) and 542–584 (VLPA…QPDA). Basic and acidic residues predominate over residues 499 to 515 (RPQEKDDDQKDSVEEMR). Acidic residues predominate over residues 547–571 (EGDEDREAEVDEEEGALDSDLDLDL).

It belongs to the DEAD box helicase family. DEAH subfamily. In terms of assembly, part of the small subunit (SSU) processome, composed of more than 70 proteins and the RNA chaperone small nucleolar RNA (snoRNA) U3. Interacts with UTP14A. In terms of tissue distribution, expressed in the fallopian tube, ovary, uterus and testis. Also expressed in the brain.

The protein localises to the nucleus. Its subcellular location is the nucleolus. It is found in the cytoplasm. It localises to the nucleus membrane. It catalyses the reaction ATP + H2O = ADP + phosphate + H(+). Its function is as follows. ATP-binding RNA helicase that plays a role in maturation of the small ribosomal subunit in ribosome biogenesis. Required for the release of the U3 snoRNP from pre-ribosomal particles. Part of the small subunit (SSU) processome, first precursor of the small eukaryotic ribosomal subunit. During the assembly of the SSU processome in the nucleolus, many ribosome biogenesis factors, an RNA chaperone and ribosomal proteins associate with the nascent pre-rRNA and work in concert to generate RNA folding, modifications, rearrangements and cleavage as well as targeted degradation of pre-ribosomal RNA by the RNA exosome. Plays a role in early testis development. Probably also plays a role in brain development. This Homo sapiens (Human) protein is Probable ATP-dependent RNA helicase DHX37.